The primary structure comprises 1513 residues: DNA polymerase alpha catalytic subunit (1513 aa).

Residues Ser-235–Asp-254 form a disordered region. The Zn(2+) site is built by Cys-1344, Cys-1347, Cys-1370, Cys-1373, Cys-1404, Cys-1409, Cys-1422, and Cys-1427. The CysA-type zinc finger occupies Cys-1344–Cys-1373. The CysB motif signature appears at Cys-1404–Cys-1427.

It belongs to the DNA polymerase type-B family.

It is found in the nucleus. It carries out the reaction DNA(n) + a 2'-deoxyribonucleoside 5'-triphosphate = DNA(n+1) + diphosphate. In terms of biological role, polymerase alpha in a complex with DNA primase is a replicative polymerase. In Oxytricha trifallax (Sterkiella histriomuscorum), this protein is DNA polymerase alpha catalytic subunit.